The primary structure comprises 206 residues: GTP cyclohydrolase 1 (206 aa).

Zn(2+) is bound by residues C95, H98, and C166.

This sequence belongs to the GTP cyclohydrolase I family. In terms of assembly, toroid-shaped homodecamer, composed of two pentamers of five dimers.

It carries out the reaction GTP + H2O = 7,8-dihydroneopterin 3'-triphosphate + formate + H(+). It participates in cofactor biosynthesis; 7,8-dihydroneopterin triphosphate biosynthesis; 7,8-dihydroneopterin triphosphate from GTP: step 1/1. The polypeptide is GTP cyclohydrolase 1 (Bartonella quintana (strain Toulouse) (Rochalimaea quintana)).